The chain runs to 251 residues: MTDHIRPLIAGNWKMNGLKASTAEFEAMLAGAAEVTGKADLLVCPPATLLAGFADKARGTRAVAVGAQDCHAKASGAHTGDLSAEMLADAGASAIIVGHSERRADHGESDVVVHQKTEAVWRAGLVAIVCVGETQQQRDAGQTLDILRGQLNLSLPQGSTAANLTVAYEPVWAIGTGLTPTAKDVEQIHAFIRTLLIERFNGEGARMRILYGGSVKPSNAAELMAVANVNGALVGGASLKAADFLAIAKGC.

12 to 14 (NWK) contributes to the substrate binding site. Catalysis depends on His99, which acts as the Electrophile. Glu169 serves as the catalytic Proton acceptor. Substrate-binding positions include Gly175, Ser214, and 235-236 (GG).

Belongs to the triosephosphate isomerase family. In terms of assembly, homodimer.

The protein resides in the cytoplasm. It carries out the reaction D-glyceraldehyde 3-phosphate = dihydroxyacetone phosphate. It participates in carbohydrate biosynthesis; gluconeogenesis. It functions in the pathway carbohydrate degradation; glycolysis; D-glyceraldehyde 3-phosphate from glycerone phosphate: step 1/1. Functionally, involved in the gluconeogenesis. Catalyzes stereospecifically the conversion of dihydroxyacetone phosphate (DHAP) to D-glyceraldehyde-3-phosphate (G3P). The sequence is that of Triosephosphate isomerase from Bradyrhizobium sp. (strain BTAi1 / ATCC BAA-1182).